Reading from the N-terminus, the 80-residue chain is Clavaspirin (80 aa).

The N-terminal stretch at 1–17 (MKTIILILLILGLGIDA) is a signal peptide. Residues 18-29 (KSLEESKADEEK) constitute a propeptide that is removed on maturation. At Leu-52 the chain carries Leucine amide. Residues 53 to 80 (GDDQQDNGKFYGYYAEDNGKHWYDTGDQ) constitute a propeptide that is removed on maturation.

In terms of tissue distribution, pharyngeal tissues and hemocytes.

It localises to the secreted. In terms of biological role, exhibits broad-spectrum antimicrobial activity against both Gram-positive and Gram-negative bacteria. Has potent hemolytic activity. This Styela clava (Sea squirt) protein is Clavaspirin.